The sequence spans 133 residues: Napin-1 (133 aa).

2 propeptides span residues proline 31–glycine 49 and proline 131–tyrosine 133.

The protein belongs to the 2S seed storage albumins family. As to quaternary structure, the mature protein consists of a small and a large chain linked by disulfide bonds. Cotyledons and the axis.

The small, basic, water-soluble napins are one of the two major kinds of storage proteins synthesized in the seed during its maturation. In Brassica napus (Rape), this protein is Napin-1.